Reading from the N-terminus, the 383-residue chain is UDP-D-xylose:L-fucose alpha-1,3-D-xylosyltransferase 3 (383 aa).

The Cytoplasmic segment spans residues 1-20; it reads MAQQSQRPISNRHISLLNRN. Residues 21–41 form a helical; Signal-anchor for type II membrane protein membrane-spanning segment; that stretch reads GLILLLLLALFVILGVFLPLT. Residues 42–383 lie on the Lumenal side of the membrane; that stretch reads KSSLFMFPNT…KNRGKKHKLP (342 aa). 3 N-linked (GlcNAc...) asparagine glycosylation sites follow: N50, N82, and N157. Residues 180 to 182 carry the DXD motif motif; it reads DVD. N212, N258, N301, N306, N357, and N364 each carry an N-linked (GlcNAc...) asparagine glycan.

This sequence belongs to the glycosyltransferase 77 family. It depends on Mn(2+) as a cofactor. Mg(2+) serves as cofactor. Glycosylated. Expressed around trichome support cells in the adaxial epidermis of rosette leaves, in cauline leaves, petals and both the proximal and distal ends of siliques.

It is found in the golgi apparatus membrane. Catalyzes the transfer of D-xylose from UDP-alpha-D-xylose onto L-fucose. Probably involved in the biosynthesis of rhamnogalacturonan II (RG-II) through xylosylation of the internal fucose moiety of the A-chain of RG-II, a structurally complex pectic polysaccharide of the primary cell wall. RG-II is essential for the cell wall integrity of rapidly growing tissues such as roots and pollen tube growth and elongation. In Arabidopsis thaliana (Mouse-ear cress), this protein is UDP-D-xylose:L-fucose alpha-1,3-D-xylosyltransferase 3.